The sequence spans 416 residues: MAEAPMAQAPTAQAPTAEAAAEAPGLRNFTINFGPQHPAAHGVLRLVLELDGEVVERVDPHIGLLHRGTEKLIEHKTYLQAIPYFDRLDYVAPMNQEHAFCLAVEKLLGIAVPRRAQLIRVLYCEIGRILSHLLNVTTQAMDVGALTPPLWGFEEREKLMMFYERASGSRMHAAYFRVGGVHQDLPPQLVADIDSWCDSFIQVVDDLETLLTDNRIFKQRNVDIGVVTLEQAWEWGFSGVMVRGSGAAWDLRKSQPYECYAEMDFDIPIGKNGDCYDRYCLRVEEMRQSIRIMKQCIAKLRAPDGQGRVAIDDNKIFPPRRGEMKRSMESLIHHFKLYTEGFRVPEGEVYVAVEAPKGEFGVYLVSDGSNKPYKCKIRAPGFAHLQAMDFICRGHLLADVSAILGSLDIVFGEVDR.

It belongs to the complex I 49 kDa subunit family. In terms of assembly, NDH-1 is composed of 14 different subunits. Subunits NuoB, C, D, E, F, and G constitute the peripheral sector of the complex.

It is found in the cell inner membrane. The catalysed reaction is a quinone + NADH + 5 H(+)(in) = a quinol + NAD(+) + 4 H(+)(out). Its function is as follows. NDH-1 shuttles electrons from NADH, via FMN and iron-sulfur (Fe-S) centers, to quinones in the respiratory chain. The immediate electron acceptor for the enzyme in this species is believed to be ubiquinone. Couples the redox reaction to proton translocation (for every two electrons transferred, four hydrogen ions are translocated across the cytoplasmic membrane), and thus conserves the redox energy in a proton gradient. The chain is NADH-quinone oxidoreductase subunit D from Rhodopseudomonas palustris (strain BisB5).